We begin with the raw amino-acid sequence, 335 residues long: Acetyl-coenzyme A carboxylase carboxyl transferase subunit alpha (335 aa).

The region spanning 48-308 (TLEKKVDALR…KGMLIEELKA (261 aa)) is the CoA carboxyltransferase C-terminal domain.

It belongs to the AccA family. As to quaternary structure, acetyl-CoA carboxylase is a heterohexamer composed of biotin carboxyl carrier protein (AccB), biotin carboxylase (AccC) and two subunits each of ACCase subunit alpha (AccA) and ACCase subunit beta (AccD).

Its subcellular location is the cytoplasm. The enzyme catalyses N(6)-carboxybiotinyl-L-lysyl-[protein] + acetyl-CoA = N(6)-biotinyl-L-lysyl-[protein] + malonyl-CoA. It functions in the pathway lipid metabolism; malonyl-CoA biosynthesis; malonyl-CoA from acetyl-CoA: step 1/1. Its function is as follows. Component of the acetyl coenzyme A carboxylase (ACC) complex. First, biotin carboxylase catalyzes the carboxylation of biotin on its carrier protein (BCCP) and then the CO(2) group is transferred by the carboxyltransferase to acetyl-CoA to form malonyl-CoA. This Chlorobium luteolum (strain DSM 273 / BCRC 81028 / 2530) (Pelodictyon luteolum) protein is Acetyl-coenzyme A carboxylase carboxyl transferase subunit alpha.